The primary structure comprises 471 residues: Venom prothrombin activator vestarin-D2 (471 aa).

The N-terminal stretch at 1–20 (MAPQLLLCLILTFLWSLPEA) is a signal peptide. Positions 21–40 (ESNVFLKSNVANRFLQRTKR) are excised as a propeptide. One can recognise a Gla domain in the interval 41 to 86 (ANSIFEEIRPGNIERECVEEKCSKEEAREVFQDNEKTEAFWTVYVD). 4-carboxyglutamate is present on residues Glu46, Glu47, Glu54, Glu56, Glu59, Glu60, Glu65, Glu66, Glu69, and Glu75. Residues Cys57 and Cys62 are joined by a disulfide bond. The region spanning 86-122 (DGDQCLSNPCHYRGTCKDGIGSYTCTCLPGYEGKNCE) is the EGF-like 1; calcium-binding domain. 10 cysteine pairs are disulfide-bonded: Cys90-Cys101, Cys95-Cys110, Cys112-Cys121, Cys129-Cys140, Cys136-Cys149, Cys151-Cys164, Cys172-Cys333, Cys233-Cys238, Cys381-Cys395, and Cys406-Cys434. Ser92 carries O-linked (Hex...) serine glycosylation. In terms of domain architecture, EGF-like 2 spans 129–164 (CRLFNGNCWHFCKTVQNDTQCSCAEGYRLGVDGFSC). Residues 182-226 (REASLPDFHFSDDYDAIDENNLVETVQSQSATLLKKSDNPSPDIR) constitute a propeptide, activation peptide. One can recognise a Peptidase S1 domain in the interval 227–458 (IVSGLDCKLG…FIPWIKTIMR (232 aa)). The active-site Charge relay system is the His268. N-linked (GlcNAc...) asparagine glycosylation occurs at Asn271. The active-site Charge relay system is the Asp313. Ser410 acts as the Charge relay system in catalysis.

The protein belongs to the peptidase S1 family. Snake venom subfamily. In terms of assembly, heterodimer of a light chain and a heavy chain; disulfide-linked. The vitamin K-dependent, enzymatic carboxylation of some glutamate residues allows the modified protein to bind calcium. Expressed by the venom gland.

It is found in the secreted. The enzyme catalyses Selective cleavage of Arg-|-Thr and then Arg-|-Ile bonds in prothrombin to form thrombin.. In terms of biological role, snake prothrombin activator that attacks the hemostatic system of prey. This protein is functionally similar to blood coagulation factor Xa. This chain is Venom prothrombin activator vestarin-D2, found in Demansia vestigiata (Lesser black whip snake).